A 568-amino-acid polypeptide reads, in one-letter code: Proline--tRNA ligase (568 aa).

It belongs to the class-II aminoacyl-tRNA synthetase family. ProS type 1 subfamily. Homodimer.

Its subcellular location is the cytoplasm. It catalyses the reaction tRNA(Pro) + L-proline + ATP = L-prolyl-tRNA(Pro) + AMP + diphosphate. Its function is as follows. Catalyzes the attachment of proline to tRNA(Pro) in a two-step reaction: proline is first activated by ATP to form Pro-AMP and then transferred to the acceptor end of tRNA(Pro). As ProRS can inadvertently accommodate and process non-cognate amino acids such as alanine and cysteine, to avoid such errors it has two additional distinct editing activities against alanine. One activity is designated as 'pretransfer' editing and involves the tRNA(Pro)-independent hydrolysis of activated Ala-AMP. The other activity is designated 'posttransfer' editing and involves deacylation of mischarged Ala-tRNA(Pro). The misacylated Cys-tRNA(Pro) is not edited by ProRS. This is Proline--tRNA ligase from Halorhodospira halophila (strain DSM 244 / SL1) (Ectothiorhodospira halophila (strain DSM 244 / SL1)).